The following is a 366-amino-acid chain: Putative amino-acid transporter MJ1196 (366 aa).

11 helical membrane passes run 14–34 (ITSI…LLFG), 37–57 (IIWG…PFAY), 87–107 (ILWL…EIVF), 111–131 (FNVS…ILGG), 141–161 (IFGI…GIKI), 173–193 (ILTI…TMPL), 205–225 (GLLV…LTIV), 247–267 (FLLA…LFTL), 291–311 (IPYY…IFDA), 314–334 (LVDM…LAVF), and 346–366 (LISM…FIIL).

This sequence belongs to the amino acid-polyamine-organocation (APC) superfamily.

Its subcellular location is the cell membrane. The chain is Putative amino-acid transporter MJ1196 from Methanocaldococcus jannaschii (strain ATCC 43067 / DSM 2661 / JAL-1 / JCM 10045 / NBRC 100440) (Methanococcus jannaschii).